The following is a 118-amino-acid chain: Holo-[acyl-carrier-protein] synthase (118 aa).

Residues Asp8 and Glu58 each contribute to the Mg(2+) site.

This sequence belongs to the P-Pant transferase superfamily. AcpS family. Requires Mg(2+) as cofactor.

The protein localises to the cytoplasm. The catalysed reaction is apo-[ACP] + CoA = holo-[ACP] + adenosine 3',5'-bisphosphate + H(+). Its function is as follows. Transfers the 4'-phosphopantetheine moiety from coenzyme A to a Ser of acyl-carrier-protein. This Streptococcus pyogenes serotype M28 (strain MGAS6180) protein is Holo-[acyl-carrier-protein] synthase.